The sequence spans 446 residues: Amino-acid acetyltransferase (446 aa).

The 140-residue stretch at 299–438 (EQVRDAEIDD…QKLYNFQRKS (140 aa)) folds into the N-acetyltransferase domain.

The protein belongs to the acetyltransferase family. ArgA subfamily.

It is found in the cytoplasm. The catalysed reaction is L-glutamate + acetyl-CoA = N-acetyl-L-glutamate + CoA + H(+). Its pathway is amino-acid biosynthesis; L-arginine biosynthesis; N(2)-acetyl-L-ornithine from L-glutamate: step 1/4. This chain is Amino-acid acetyltransferase, found in Aliivibrio fischeri (strain ATCC 700601 / ES114) (Vibrio fischeri).